A 383-amino-acid polypeptide reads, in one-letter code: 3-dehydroquinate synthase (383 aa).

Residues 81-86 (EGEVSK), 115-119 (GVVGD), 139-140 (TS), lysine 152, and lysine 161 each bind NAD(+). Residues glutamate 194, histidine 256, and histidine 274 each contribute to the Zn(2+) site.

It belongs to the sugar phosphate cyclases superfamily. Dehydroquinate synthase family. Co(2+) serves as cofactor. The cofactor is Zn(2+). NAD(+) is required as a cofactor.

Its subcellular location is the cytoplasm. The catalysed reaction is 7-phospho-2-dehydro-3-deoxy-D-arabino-heptonate = 3-dehydroquinate + phosphate. The protein operates within metabolic intermediate biosynthesis; chorismate biosynthesis; chorismate from D-erythrose 4-phosphate and phosphoenolpyruvate: step 2/7. Its function is as follows. Catalyzes the conversion of 3-deoxy-D-arabino-heptulosonate 7-phosphate (DAHP) to dehydroquinate (DHQ). The protein is 3-dehydroquinate synthase of Nitrobacter hamburgensis (strain DSM 10229 / NCIMB 13809 / X14).